The primary structure comprises 158 residues: Low molecular weight phosphotyrosine protein phosphatase (158 aa).

Residue alanine 2 is modified to N-acetylalanine. Cysteine 13 serves as the catalytic Nucleophile. Residue arginine 19 is part of the active site. Catalysis depends on aspartate 130, which acts as the Proton donor. Tyrosine 132 and tyrosine 133 each carry phosphotyrosine.

This sequence belongs to the low molecular weight phosphotyrosine protein phosphatase family. As to quaternary structure, interacts with EPHA2; dephosphorylates EPHA2. Interacts with EPHB1. Interacts with the SH3 domain of SPTAN1. Phosphorylated by LCK. Phosphorylation at Tyr-132 increases its phosphatase activity.

It is found in the cytoplasm. The enzyme catalyses O-phospho-L-tyrosyl-[protein] + H2O = L-tyrosyl-[protein] + phosphate. The catalysed reaction is a phosphate monoester + H2O = an alcohol + phosphate. Inhibited by sulfhydryl reagents. Acts on tyrosine phosphorylated proteins, low-MW aryl phosphates and natural and synthetic acyl phosphates with differences in substrate specificity between isoform 1 and isoform 2. The chain is Low molecular weight phosphotyrosine protein phosphatase (ACP1) from Sus scrofa (Pig).